Here is a 370-residue protein sequence, read N- to C-terminus: GTPase Obg (370 aa).

One can recognise an Obg domain in the interval 1-159 (MKFIDEARIE…RMLRLELKVL (159 aa)). The interval 127–146 (NLHFKSSTNRAPRQKTDGKP) is disordered. The OBG-type G domain maps to 160-334 (ADVGLLGMPN…LCYAIYDYLA (175 aa)). GTP-binding positions include 166–173 (GMPNAGKS), 191–195 (FTTLA), 213–216 (DIPG), 284–287 (NKLD), and 315–317 (SAL). Ser-173 and Thr-193 together coordinate Mg(2+).

Belongs to the TRAFAC class OBG-HflX-like GTPase superfamily. OBG GTPase family. As to quaternary structure, monomer. The cofactor is Mg(2+).

It is found in the cytoplasm. Functionally, an essential GTPase which binds GTP, GDP and possibly (p)ppGpp with moderate affinity, with high nucleotide exchange rates and a fairly low GTP hydrolysis rate. Plays a role in control of the cell cycle, stress response, ribosome biogenesis and in those bacteria that undergo differentiation, in morphogenesis control. The chain is GTPase Obg from Burkholderia lata (strain ATCC 17760 / DSM 23089 / LMG 22485 / NCIMB 9086 / R18194 / 383).